A 266-amino-acid chain; its full sequence is Phosphatidylglycerol--prolipoprotein diacylglyceryl transferase (266 aa).

7 consecutive transmembrane segments (helical) span residues 21 to 41 (LAIRWYGLMYLVGFLFAMWLA), 60 to 80 (LLFAGFLGVVLGGRIGYVLFY), 95 to 115 (VWTGGMSFHGGLLGVMTAMLW), 124 to 144 (FFSVADFIAPLVPFGLGMGRM), 176 to 196 (SQLYEAFLEGFVLLIILNIFI), 203 to 223 (GAVSGLFLIGYGSFRFIIEYF), and 236 to 256 (WISMGQILSSPMIIFGALLML). Residue arginine 143 coordinates a 1,2-diacyl-sn-glycero-3-phospho-(1'-sn-glycerol).

This sequence belongs to the Lgt family.

Its subcellular location is the cell inner membrane. It catalyses the reaction L-cysteinyl-[prolipoprotein] + a 1,2-diacyl-sn-glycero-3-phospho-(1'-sn-glycerol) = an S-1,2-diacyl-sn-glyceryl-L-cysteinyl-[prolipoprotein] + sn-glycerol 1-phosphate + H(+). Its pathway is protein modification; lipoprotein biosynthesis (diacylglyceryl transfer). Catalyzes the transfer of the diacylglyceryl group from phosphatidylglycerol to the sulfhydryl group of the N-terminal cysteine of a prolipoprotein, the first step in the formation of mature lipoproteins. The polypeptide is Phosphatidylglycerol--prolipoprotein diacylglyceryl transferase (Photobacterium profundum (strain SS9)).